The chain runs to 267 residues: Hydroxyethylthiazole kinase (267 aa).

Methionine 48 serves as a coordination point for substrate. Positions 124 and 170 each coordinate ATP. A substrate-binding site is contributed by glycine 197.

The protein belongs to the Thz kinase family. The cofactor is Mg(2+).

The catalysed reaction is 5-(2-hydroxyethyl)-4-methylthiazole + ATP = 4-methyl-5-(2-phosphooxyethyl)-thiazole + ADP + H(+). The protein operates within cofactor biosynthesis; thiamine diphosphate biosynthesis; 4-methyl-5-(2-phosphoethyl)-thiazole from 5-(2-hydroxyethyl)-4-methylthiazole: step 1/1. In terms of biological role, catalyzes the phosphorylation of the hydroxyl group of 4-methyl-5-beta-hydroxyethylthiazole (THZ). The protein is Hydroxyethylthiazole kinase of Aliivibrio fischeri (strain ATCC 700601 / ES114) (Vibrio fischeri).